Here is a 197-residue protein sequence, read N- to C-terminus: MEKPVTDRPSEAEVEAAVRTLLRWTGDNPDREGLIDTPKRVAKAFREMFGGYDMCPAEELGRTFEEVAGYDDLVIVKDIHFHSHCEHHMVPIIGKAHVGYLPDGKVVGLSKIARVVDIFAHRLQTQEALTAQIAGVIQDVLNPRGVAVMIEAEHMCMAMRGIRKQGSTTLTSTFTGVFKDTPEEQVRFVTMVRGGGA.

Zn(2+) is bound by residues cysteine 85, histidine 88, and cysteine 156.

Belongs to the GTP cyclohydrolase I family. Toroid-shaped homodecamer, composed of two pentamers of five dimers.

The catalysed reaction is GTP + H2O = 7,8-dihydroneopterin 3'-triphosphate + formate + H(+). It functions in the pathway cofactor biosynthesis; 7,8-dihydroneopterin triphosphate biosynthesis; 7,8-dihydroneopterin triphosphate from GTP: step 1/1. The polypeptide is GTP cyclohydrolase 1 (Mesorhizobium japonicum (strain LMG 29417 / CECT 9101 / MAFF 303099) (Mesorhizobium loti (strain MAFF 303099))).